Reading from the N-terminus, the 318-residue chain is Protein IMPACT-A (318 aa).

In terms of domain architecture, RWD spans 14–116 (DEVEALTSIY…EKIREFLLGK (103 aa)). Residues 296–318 (EESSKQTAKSKKVGKECKKKADH) form a disordered region. Over residues 308-318 (VGKECKKKADH) the composition is skewed to basic and acidic residues.

Belongs to the IMPACT family. Interacts with GCN1; prevents the interaction of GCN1 with EIF2AK4/GCN2 and inhibits EIF2AK4/GCN2 kinase activity. Interaction with RPL39; this interaction occurs in a GCN1-independent manner. Associates with ribosomes; this interaction occurs in a GCN1-independent manner. Associates with actin; this interaction occurs in a GCN1-independent manner.

The protein localises to the cytoplasm. Its function is as follows. Translational regulator that ensures constant high levels of translation upon a variety of stress conditions, such as amino acid starvation, UV-C irradiation, proteasome inhibitor treatment and glucose deprivation. Plays a role as a negative regulator of the EIF2AK4/GCN2 kinase activity; impairs GCN1-mediated EIF2AK4/GCN2 activation, and hence EIF2AK4/GCN2-mediated eIF-2-alpha phosphorylation and subsequent down-regulation of protein synthesis. Plays a role in differentiation of neuronal cells by stimulating neurite outgrowth. This is Protein IMPACT-A (impact-A) from Xenopus tropicalis (Western clawed frog).